We begin with the raw amino-acid sequence, 954 residues long: Kinesin-like protein KIN-14A (954 aa).

Residues alanine 24–glutamate 142 form the Calponin-homology (CH) domain. Residues leucine 242–aspartate 293 are a coiled coil. One can recognise a Kinesin motor domain in the interval asparagine 332 to valine 651. Glycine 413–threonine 420 contributes to the ATP binding site. Positions alanine 656–lysine 692 form a coiled coil. Residues valine 697–proline 709 show a composition bias toward basic and acidic residues. Disordered stretches follow at residues valine 697–asparagine 743, asparagine 824–isoleucine 858, and proline 882–leucine 954. 2 stretches are compositionally biased toward polar residues: residues aspartate 831–lysine 849 and alanine 886–threonine 898.

It belongs to the TRAFAC class myosin-kinesin ATPase superfamily. Kinesin family. KIN-14 subfamily.

The sequence is that of Kinesin-like protein KIN-14A from Oryza sativa subsp. japonica (Rice).